The following is a 282-amino-acid chain: HTH-type transcriptional activator RhaR (282 aa).

Positions Asp-179–Leu-277 constitute an HTH araC/xylS-type domain. 2 consecutive DNA-binding regions (H-T-H motif) follow at residues Asp-196–Thr-217 and Val-244–Thr-267.

As to quaternary structure, binds DNA as a dimer.

Its subcellular location is the cytoplasm. Functionally, activates expression of the rhaSR operon in response to L-rhamnose. The chain is HTH-type transcriptional activator RhaR from Salmonella typhi.